Here is a 463-residue protein sequence, read N- to C-terminus: tRNA dimethylallyltransferase 9 (463 aa).

An ATP-binding site is contributed by 57–64 (GPTGAGKS). A substrate-binding site is contributed by 59-64 (TGAGKS). The tract at residues 82 to 85 (DSVQ) is interaction with substrate tRNA.

The protein belongs to the IPP transferase family. Mg(2+) is required as a cofactor. Expressed ubiquitously, with highest expression in proliferating tissues.

Its subcellular location is the cytoplasm. The catalysed reaction is adenosine(37) in tRNA + dimethylallyl diphosphate = N(6)-dimethylallyladenosine(37) in tRNA + diphosphate. Functionally, catalyzes the transfer of a dimethylallyl group onto the adenine at position 37 in tRNAs that read codons beginning with uridine, leading to the formation of N6-(dimethylallyl)adenosine (i(6)A). Involved in the cis-type cytokinin biosynthesis. This is tRNA dimethylallyltransferase 9 (IPT9) from Arabidopsis thaliana (Mouse-ear cress).